The chain runs to 194 residues: Oligoribonuclease (194 aa).

The 164-residue stretch at 11–174 (LIWIDLEMTG…SDVRDSINEL (164 aa)) folds into the Exonuclease domain. Y132 is an active-site residue.

The protein belongs to the oligoribonuclease family.

Its subcellular location is the cytoplasm. Its function is as follows. 3'-to-5' exoribonuclease specific for small oligoribonucleotides. In Xanthomonas oryzae pv. oryzae (strain MAFF 311018), this protein is Oligoribonuclease.